A 509-amino-acid polypeptide reads, in one-letter code: Probable Xaa-Pro aminopeptidase MAC_04092 (509 aa).

Mn(2+) is bound by residues Asp273, Asp284, Glu437, and Glu478.

It belongs to the peptidase M24B family. Mn(2+) serves as cofactor.

The catalysed reaction is Release of any N-terminal amino acid, including proline, that is linked to proline, even from a dipeptide or tripeptide.. Catalyzes the removal of a penultimate prolyl residue from the N-termini of peptides. This Metarhizium acridum (strain CQMa 102) protein is Probable Xaa-Pro aminopeptidase MAC_04092.